We begin with the raw amino-acid sequence, 80 residues long: Cytochrome c oxidase subunit 7A1, mitochondrial (80 aa).

The transit peptide at 1 to 21 directs the protein to the mitochondrion; it reads MLAPRVSQALIRSFSSTARNR. Topologically, residues 22–46 are mitochondrial matrix; that stretch reads LKNRVPEKQKLFQEDNGIPVYLKGG. The helical transmembrane segment at 47–75 threads the bilayer; it reads VVDHILYRVTMGLCLGGTAYGVYCLAWAS. The Mitochondrial intermembrane segment spans residues 76–80; that stretch reads FPRNK.

The protein belongs to the cytochrome c oxidase VIIa family. In terms of assembly, component of the complex IV (CIV, cytochrome c oxidase), a multisubunit enzyme composed of 14 subunits. The complex is composed of a catalytic core of 3 subunits MT-CO1, MT-CO2 and MT-CO3, encoded in the mitochondrial DNA, and 11 supernumerary subunits COX4I1 (or COX4I2), COX5A, COX5B, COX6A2 (or COX6A1), COX6B1 (or COX6B2), COX6C, COX7A1 (or COX7A2), COX7B, COX7C, COX8B and NDUFA4, which are encoded in the nuclear genome. The complex exists as a monomer or a dimer and forms supercomplexes (SCs) in the inner mitochondrial membrane with NADH-ubiquinone oxidoreductase (complex I, CI) and ubiquinol-cytochrome c oxidoreductase (cytochrome b-c1 complex, complex III, CIII), resulting in different assemblies (supercomplex SCI(1)III(2)IV(1) and megacomplex MCI(2)III(2)IV(2)).

Its subcellular location is the mitochondrion inner membrane. The protein operates within energy metabolism; oxidative phosphorylation. Functionally, component of the mitochondrial respiratory complex IV (CIV, also named cytochrome c oxidase complex), the last enzyme in the mitochondrial electron transport chain which drives oxidative phosphorylation. The CIV complex is the component of the respiratory chain that catalyzes the reduction of oxygen to water. Acts as an assembly factor that specifically drives the homodimerization of CIV complexes, mediating the formation of mitochondrial respiratory supercomplexes (respirasomes) containing two CIV: supercomplxes with two molecules of CIV show improved activity. Despite being highly expressed in brown adipose tissue, not required for thermogenesis. The chain is Cytochrome c oxidase subunit 7A1, mitochondrial (COX7A1) from Saimiri sciureus (Common squirrel monkey).